The following is a 198-amino-acid chain: MVTTYLLFIVAYLLGSIPFALVVGKIGYGIDIREHGSGNLGGTNTFRTLGKKAGFTVTIADILKGTLATSLPMVFGLDIHPLWFGLAAVLGHVYPIFAKFRGGKAVATSAGVLLCYSPVVFAILAVVFFTLLFTTRYVSLSSMVTAVVAVIASIVTGDKIFIIAMCLLAGMVIYKHRANIGRIINKTEPKANFSKKQK.

The next 4 helical transmembrane spans lie at 4–24 (TYLLFIVAYLLGSIPFALVVG), 71–91 (LPMVFGLDIHPLWFGLAAVLG), 113–133 (LLCYSPVVFAILAVVFFTLLF), and 147–167 (VVAVIASIVTGDKIFIIAMCL).

This sequence belongs to the PlsY family. As to quaternary structure, probably interacts with PlsX.

It is found in the cell membrane. The catalysed reaction is an acyl phosphate + sn-glycerol 3-phosphate = a 1-acyl-sn-glycero-3-phosphate + phosphate. The protein operates within lipid metabolism; phospholipid metabolism. Its function is as follows. Catalyzes the transfer of an acyl group from acyl-phosphate (acyl-PO(4)) to glycerol-3-phosphate (G3P) to form lysophosphatidic acid (LPA). This enzyme utilizes acyl-phosphate as fatty acyl donor, but not acyl-CoA or acyl-ACP. The polypeptide is Glycerol-3-phosphate acyltransferase 3 (Bacillus anthracis).